The sequence spans 149 residues: Large ribosomal subunit protein bL9 (149 aa).

This sequence belongs to the bacterial ribosomal protein bL9 family. Part of the 50S ribosomal subunit. In stalled/collided disomes (pairs of ribosomes where the leading ribosome is stalled and a second ribosome has collided with it), bL9 in the collided ribosome contacts bS6 and uL2, while it contacts only helices of the 16S rRNA in the stalled ribosome; the inter-ribosome bridge thus formed is different from that formed between normally translating ribosomes.

Functionally, binds to the 23S rRNA. The chain is Large ribosomal subunit protein bL9 from Bacillus subtilis (strain 168).